The following is a 158-amino-acid chain: Inorganic pyrophosphatase (158 aa).

Glu8 serves as a coordination point for Mg(2+). Substrate contacts are provided by Lys16, Arg30, and Tyr42. Mg(2+)-binding residues include Asp52, Asp57, Asp84, and Asp89. Asp89 acts as the Proton acceptor in catalysis. Substrate is bound at residue Tyr125.

This sequence belongs to the PPase family. In terms of assembly, homohexamer. It depends on Mg(2+) as a cofactor.

It localises to the cytoplasm. The catalysed reaction is diphosphate + H2O = 2 phosphate + H(+). Its function is as follows. Catalyzes the hydrolysis of inorganic pyrophosphate (PPi) forming two phosphate ions. This Corynebacterium efficiens (strain DSM 44549 / YS-314 / AJ 12310 / JCM 11189 / NBRC 100395) protein is Inorganic pyrophosphatase.